The chain runs to 244 residues: Cobalt transport protein CbiM (244 aa).

The N-terminal stretch at 1–20 is a signal peptide; it reads MRKITFIAALLSLLPRYALA. The next 6 helical transmembrane spans lie at 31–51, 63–83, 95–115, 117–137, 161–181, and 201–221; these read KWCL…LIYI, ILLG…LPSV, LGAI…VLLF, ALLL…SMAV, VFLG…LQLA, and IFAV…VIVL.

Belongs to the CbiM family. Forms an energy-coupling factor (ECF) transporter complex composed of an ATP-binding protein (A component, CbiO), a transmembrane protein (T component, CbiQ) and 2 possible substrate-capture proteins (S components, CbiM and CbiN) of unknown stoichimetry.

It is found in the cell membrane. It functions in the pathway cofactor biosynthesis; adenosylcobalamin biosynthesis. Part of the energy-coupling factor (ECF) transporter complex CbiMNOQ involved in cobalt import. In Thermosediminibacter oceani (strain ATCC BAA-1034 / DSM 16646 / JW/IW-1228P), this protein is Cobalt transport protein CbiM.